The chain runs to 446 residues: Tubulin beta chain (446 aa).

Positions 11, 69, 138, 142, 143, 144, 204, and 226 each coordinate GTP. A Mg(2+)-binding site is contributed by glutamate 69. A disordered region spans residues 423 to 446; the sequence is QQYQDATADEEEGEYEEEPAEEEQ. Positions 429-446 are enriched in acidic residues; that stretch reads TADEEEGEYEEEPAEEEQ.

The protein belongs to the tubulin family. In terms of assembly, dimer of alpha and beta chains. A typical microtubule is a hollow water-filled tube with an outer diameter of 25 nm and an inner diameter of 15 nM. Alpha-beta heterodimers associate head-to-tail to form protofilaments running lengthwise along the microtubule wall with the beta-tubulin subunit facing the microtubule plus end conferring a structural polarity. Microtubules usually have 13 protofilaments but different protofilament numbers can be found in some organisms and specialized cells. Mg(2+) is required as a cofactor.

Its subcellular location is the cytoplasm. The protein resides in the cytoskeleton. Its function is as follows. Tubulin is the major constituent of microtubules, a cylinder consisting of laterally associated linear protofilaments composed of alpha- and beta-tubulin heterodimers. Microtubules grow by the addition of GTP-tubulin dimers to the microtubule end, where a stabilizing cap forms. Below the cap, tubulin dimers are in GDP-bound state, owing to GTPase activity of alpha-tubulin. The chain is Tubulin beta chain from Pleurotus sajor-caju (Oyster mushroom).